The primary structure comprises 345 residues: MSLTYRDAGVDIDEGDRLVDLIKPHARPTLRPEVLGGIGGFGGLFALDVKKYREPVLVSGTDGVGTKLKVAFAADRHDTVGIDLVAMCVNDIAVVGAEPLFFLDYYATGKLSAEQGAQVVKGIAEGCRQAGCALIGGETAELPGFYERGEYDLAGFAVGCVDRPRIVDGTRVARGDVVIGIASSGLHSNGFSLARKALLERYPLDHRFDALGGRTLADALLEPTRIYAKDVLALLEQVPVRAFAHITGGGLPGNVPRTLPDGTRAVLEEQRWPRPAIFDLVEREGQVPRDEMYRTFNMGLGLVAVVAPGDEAAAHAALRARGLEAWTVGAIEAGGPGEATCEVVR.

Belongs to the AIR synthase family.

It is found in the cytoplasm. It carries out the reaction 2-formamido-N(1)-(5-O-phospho-beta-D-ribosyl)acetamidine + ATP = 5-amino-1-(5-phospho-beta-D-ribosyl)imidazole + ADP + phosphate + H(+). It functions in the pathway purine metabolism; IMP biosynthesis via de novo pathway; 5-amino-1-(5-phospho-D-ribosyl)imidazole from N(2)-formyl-N(1)-(5-phospho-D-ribosyl)glycinamide: step 2/2. The polypeptide is Phosphoribosylformylglycinamidine cyclo-ligase (Anaeromyxobacter dehalogenans (strain 2CP-1 / ATCC BAA-258)).